The primary structure comprises 304 residues: KIN17-like protein (304 aa).

Residues 26–50 (WYCSACQKQMRDENGFKCHTQSEGH) form a C2H2-type zinc finger. Disordered stretches follow at residues 204–228 (IDLSKKGNPIQLNLSSSSDSHSAQN) and 261–291 (LNKSRKKNNKDSLDQGQNVKRPRSAVEDIIA).

It belongs to the KIN17 family.

Its subcellular location is the nucleus. It localises to the nucleolus. The protein is KIN17-like protein of Schizosaccharomyces pombe (strain 972 / ATCC 24843) (Fission yeast).